A 232-amino-acid chain; its full sequence is Probable proteasome subunit alpha type-5 (232 aa).

The protein belongs to the peptidase T1A family. As to quaternary structure, the 26S proteasome consists of a 20S proteasome core and two 19S regulatory subunits. The 20S proteasome core is composed of 28 subunits that are arranged in four stacked rings, resulting in a barrel-shaped structure. The two end rings are each formed by seven alpha subunits, and the two central rings are each formed by seven beta subunits. The catalytic chamber with the active sites is on the inside of the barrel.

It is found in the cytoplasm. The protein localises to the nucleus. Its function is as follows. The proteasome degrades poly-ubiquitinated proteins in the cytoplasm and in the nucleus. It is essential for the regulated turnover of proteins and for the removal of misfolded proteins. The proteasome is a multicatalytic proteinase complex that is characterized by its ability to cleave peptides with Arg, Phe, Tyr, Leu, and Glu adjacent to the leaving group at neutral or slightly basic pH. It has an ATP-dependent proteolytic activity. This chain is Probable proteasome subunit alpha type-5 (PUP2), found in Encephalitozoon cuniculi (strain GB-M1) (Microsporidian parasite).